The chain runs to 223 residues: Ribonuclease T (223 aa).

An Exonuclease domain is found at 20–194 (VVIDVETAGF…YDTERTAELF (175 aa)). Mg(2+) is bound by residues aspartate 23, glutamate 25, histidine 181, and aspartate 186. Catalysis depends on histidine 181, which acts as the Proton donor/acceptor.

It belongs to the RNase T family. In terms of assembly, homodimer. Requires Mg(2+) as cofactor.

Its function is as follows. Trims short 3' overhangs of a variety of RNA species, leaving a one or two nucleotide 3' overhang. Responsible for the end-turnover of tRNA: specifically removes the terminal AMP residue from uncharged tRNA (tRNA-C-C-A). Also appears to be involved in tRNA biosynthesis. The chain is Ribonuclease T from Shewanella baltica (strain OS155 / ATCC BAA-1091).